We begin with the raw amino-acid sequence, 307 residues long: Nucleotide-binding protein Achl_1824 (307 aa).

An ATP-binding site is contributed by glycine 30–serine 37. GTP is bound at residue aspartate 81–serine 84.

This sequence belongs to the RapZ-like family.

Its function is as follows. Displays ATPase and GTPase activities. This is Nucleotide-binding protein Achl_1824 from Pseudarthrobacter chlorophenolicus (strain ATCC 700700 / DSM 12829 / CIP 107037 / JCM 12360 / KCTC 9906 / NCIMB 13794 / A6) (Arthrobacter chlorophenolicus).